A 158-amino-acid polypeptide reads, in one-letter code: C-type lectin BML-1 (158 aa).

Residues 1–23 form the signal peptide; that stretch reads MGHFTFTGLCLLAMFLSLRGAEC. Intrachain disulfides connect Cys26–Cys37, Cys54–Cys154, Cys61–Cys156, and Cys129–Cys146. A C-type lectin domain is found at 33–155; it reads KNGLCYKVFS…CAALRPFLCQ (123 aa). Positions 119, 121, and 127 each coordinate Ca(2+). The Galactose-binding signature appears at 119 to 121; sequence QPD. Asn134 carries N-linked (GlcNAc...) asparagine glycosylation. Positions 142 and 143 each coordinate Ca(2+).

This sequence belongs to the true venom lectin family. Homodimer; non-covalently linked. In terms of tissue distribution, expressed by the venom gland.

It is found in the secreted. Recombinant C-type lectin BML-1 is able to agglutinate erythrocytes. May be a calcium-dependent lectin. This Bungarus multicinctus (Many-banded krait) protein is C-type lectin BML-1.